The primary structure comprises 220 residues: Ribosomal RNA large subunit methyltransferase E (220 aa).

5 residues coordinate S-adenosyl-L-methionine: Gly-60, Trp-62, Asp-92, Asp-108, and Asp-133. Catalysis depends on Lys-173, which acts as the Proton acceptor.

Belongs to the class I-like SAM-binding methyltransferase superfamily. RNA methyltransferase RlmE family.

It is found in the cytoplasm. The catalysed reaction is uridine(2552) in 23S rRNA + S-adenosyl-L-methionine = 2'-O-methyluridine(2552) in 23S rRNA + S-adenosyl-L-homocysteine + H(+). Functionally, specifically methylates the uridine in position 2552 of 23S rRNA at the 2'-O position of the ribose in the fully assembled 50S ribosomal subunit. The protein is Ribosomal RNA large subunit methyltransferase E of Paraburkholderia xenovorans (strain LB400).